We begin with the raw amino-acid sequence, 312 residues long: Coproporphyrin III ferrochelatase (312 aa).

Fe-coproporphyrin III is bound by residues Tyr13, Arg30, 46 to 47 (RY), Ser54, and Tyr125. Fe(2+) contacts are provided by His182 and Glu263.

Belongs to the ferrochelatase family.

It is found in the cytoplasm. The enzyme catalyses Fe-coproporphyrin III + 2 H(+) = coproporphyrin III + Fe(2+). It participates in porphyrin-containing compound metabolism; protoheme biosynthesis. Its function is as follows. Involved in coproporphyrin-dependent heme b biosynthesis. Catalyzes the insertion of ferrous iron into coproporphyrin III to form Fe-coproporphyrin III. The protein is Coproporphyrin III ferrochelatase of Oceanobacillus iheyensis (strain DSM 14371 / CIP 107618 / JCM 11309 / KCTC 3954 / HTE831).